A 245-amino-acid polypeptide reads, in one-letter code: MSHSGSVLRRNGFTFKQFFVAHDRCAMKVGTDGILLGAWAPVADVKRILDIGTGSGLLALMLAQRTDDNVPVDAVELDAEAAMQAQENVAHSPWAHRITVHTDDIQRWAPRQTVRFDLIISNPPYYEPGVECATPQREQARYTATLDHQTLLAIAADCITEDGFLCVVLPEQIGNAFTQQALSMGWHLRLRTDVAENEARLPHRVLLAFSPQAGECFSDRLVIRGPDQHYSESYTALTQAFYLFM.

This sequence belongs to the methyltransferase superfamily. tRNA (adenine-N(6)-)-methyltransferase family.

It localises to the cytoplasm. It catalyses the reaction adenosine(37) in tRNA1(Val) + S-adenosyl-L-methionine = N(6)-methyladenosine(37) in tRNA1(Val) + S-adenosyl-L-homocysteine + H(+). Specifically methylates the adenine in position 37 of tRNA(1)(Val) (anticodon cmo5UAC). The chain is tRNA1(Val) (adenine(37)-N6)-methyltransferase from Salmonella arizonae (strain ATCC BAA-731 / CDC346-86 / RSK2980).